The sequence spans 112 residues: UPF0060 membrane protein SAV_4756 (112 aa).

4 helical membrane-spanning segments follow: residues 8-28 (ALFV…WQGV), 33-53 (GWLW…VATL), 62-82 (ILAA…MVAD), and 91-111 (VTGA…PRGG).

It belongs to the UPF0060 family.

It is found in the cell membrane. This chain is UPF0060 membrane protein SAV_4756, found in Streptomyces avermitilis (strain ATCC 31267 / DSM 46492 / JCM 5070 / NBRC 14893 / NCIMB 12804 / NRRL 8165 / MA-4680).